Consider the following 328-residue polypeptide: D-cysteine desulfhydrase (328 aa).

N6-(pyridoxal phosphate)lysine is present on K51.

It belongs to the ACC deaminase/D-cysteine desulfhydrase family. In terms of assembly, homodimer. Pyridoxal 5'-phosphate serves as cofactor.

The enzyme catalyses D-cysteine + H2O = hydrogen sulfide + pyruvate + NH4(+) + H(+). In terms of biological role, catalyzes the alpha,beta-elimination reaction of D-cysteine and of several D-cysteine derivatives. It could be a defense mechanism against D-cysteine. The sequence is that of D-cysteine desulfhydrase from Salmonella paratyphi B (strain ATCC BAA-1250 / SPB7).